The sequence spans 358 residues: Programmed cell death protein 2-like (358 aa).

A2 carries the N-acetylalanine modification. At S20 the chain carries Phosphoserine. T22 is modified (phosphothreonine).

As to expression, higher expression in lung, colon, mammary gland, cervix, stomach and small intestine.

In terms of biological role, over-expression suppresses AP1, CREB, NFAT, and NF-kB transcriptional activation, and delays cell cycle progression at S phase. This Homo sapiens (Human) protein is Programmed cell death protein 2-like (PDCD2L).